A 92-amino-acid polypeptide reads, in one-letter code: DNA-directed RNA polymerase subunit omega (92 aa).

Belongs to the RNA polymerase subunit omega family. As to quaternary structure, the RNAP catalytic core consists of 2 alpha, 1 beta, 1 beta' and 1 omega subunit. When a sigma factor is associated with the core the holoenzyme is formed, which can initiate transcription.

The enzyme catalyses RNA(n) + a ribonucleoside 5'-triphosphate = RNA(n+1) + diphosphate. Promotes RNA polymerase assembly. Latches the N- and C-terminal regions of the beta' subunit thereby facilitating its interaction with the beta and alpha subunits. The polypeptide is DNA-directed RNA polymerase subunit omega (Shewanella amazonensis (strain ATCC BAA-1098 / SB2B)).